The following is a 179-amino-acid chain: Acireductone dioxygenase (179 aa).

Acidic residues predominate over residues 1 to 12 (MVEAWYMDDSEE). A disordered region spans residues 1-21 (MVEAWYMDDSEEDQRRPHRLE). The Fe(2+) site is built by histidine 88, histidine 90, glutamate 94, and histidine 133. Ni(2+)-binding residues include histidine 88, histidine 90, glutamate 94, and histidine 133.

It belongs to the acireductone dioxygenase (ARD) family. As to quaternary structure, monomer. Interacts with MMP14. It depends on Fe(2+) as a cofactor. Ni(2+) serves as cofactor.

The protein localises to the cytoplasm. It is found in the nucleus. Its subcellular location is the cell membrane. It carries out the reaction 1,2-dihydroxy-5-(methylsulfanyl)pent-1-en-3-one + O2 = 4-methylsulfanyl-2-oxobutanoate + formate + 2 H(+). It catalyses the reaction 1,2-dihydroxy-5-(methylsulfanyl)pent-1-en-3-one + O2 = 3-(methylsulfanyl)propanoate + CO + formate + 2 H(+). It participates in amino-acid biosynthesis; L-methionine biosynthesis via salvage pathway; L-methionine from S-methyl-5-thio-alpha-D-ribose 1-phosphate: step 5/6. Catalyzes 2 different reactions between oxygen and the acireductone 1,2-dihydroxy-3-keto-5-methylthiopentene (DHK-MTPene) depending upon the metal bound in the active site. Fe-containing acireductone dioxygenase (Fe-ARD) produces formate and 2-keto-4-methylthiobutyrate (KMTB), the alpha-ketoacid precursor of methionine in the methionine recycle pathway. Ni-containing acireductone dioxygenase (Ni-ARD) produces methylthiopropionate, carbon monoxide and formate, and does not lie on the methionine recycle pathway. Also down-regulates cell migration mediated by MMP14. In Monodelphis domestica (Gray short-tailed opossum), this protein is Acireductone dioxygenase.